The sequence spans 86 residues: Large ribosomal subunit protein eL43 (86 aa).

A C4-type zinc finger spans residues 38–60; it reads CPFCGHKGKVYRLSTGVWACKKC.

Belongs to the eukaryotic ribosomal protein eL43 family. Requires Zn(2+) as cofactor.

This chain is Large ribosomal subunit protein eL43, found in Desulfurococcus amylolyticus (strain DSM 18924 / JCM 16383 / VKM B-2413 / 1221n) (Desulfurococcus kamchatkensis).